A 354-amino-acid polypeptide reads, in one-letter code: Histidinol-phosphate aminotransferase (354 aa).

Lys-210 bears the N6-(pyridoxal phosphate)lysine mark.

It belongs to the class-II pyridoxal-phosphate-dependent aminotransferase family. Histidinol-phosphate aminotransferase subfamily. Homodimer. Pyridoxal 5'-phosphate is required as a cofactor.

It catalyses the reaction L-histidinol phosphate + 2-oxoglutarate = 3-(imidazol-4-yl)-2-oxopropyl phosphate + L-glutamate. It participates in amino-acid biosynthesis; L-histidine biosynthesis; L-histidine from 5-phospho-alpha-D-ribose 1-diphosphate: step 7/9. The protein is Histidinol-phosphate aminotransferase of Clostridium botulinum (strain 657 / Type Ba4).